Here is a 331-residue protein sequence, read N- to C-terminus: Olfactory receptor 10S1 (331 aa).

Residues 1-38 lie on the Extracellular side of the membrane; the sequence is MTSRSVCEKMTMTTENPNQTVVSHFFLEGLRYTAKHSS. N18 is a glycosylation site (N-linked (GlcNAc...) asparagine). A helical transmembrane segment spans residues 39 to 59; sequence LFFLLFLLIYSITVAGNLLIL. Topologically, residues 60-67 are cytoplasmic; the sequence is LTVGSDSH. Residues 68–88 traverse the membrane as a helical segment; that stretch reads LSLPMYHFLGHLSFLDACLST. The Extracellular portion of the chain corresponds to 89–113; the sequence is VTVPKVMAGLLTLDGKVISFEGCAV. C111 and C203 are disulfide-bonded. A helical membrane pass occupies residues 114-134; the sequence is QLYCFHFLASTECFLYTVMAY. The Cytoplasmic portion of the chain corresponds to 135-153; the sequence is DRYLAICQPLHYPVAMNRR. Residues 154-174 traverse the membrane as a helical segment; that stretch reads MCAEMAGITWAIGATHAAIHT. Residues 175–211 lie on the Extracellular side of the membrane; it reads SLTFRLLYCGPCHIAYFFCDIPPVLKLACTDTTINEL. Residues 212–231 traverse the membrane as a helical segment; that stretch reads VMLASIGIVAAGCLILIVIS. Topologically, residues 232–251 are cytoplasmic; it reads YIFIVAAVLRIRTAQGRQRA. The chain crosses the membrane as a helical span at residues 252 to 272; the sequence is FSPCTAQLTGVLLYYVPPVCI. Over 273-283 the chain is Extracellular; that stretch reads YLQPRSSEAGA. A helical transmembrane segment spans residues 284–304; it reads GAPAVFYTIVTPMLNPFIYTL. The Cytoplasmic portion of the chain corresponds to 305-331; it reads RNKEVKHALQRLLCSSFRESTAGSPPP.

It belongs to the G-protein coupled receptor 1 family.

It localises to the cell membrane. Functionally, odorant receptor. The protein is Olfactory receptor 10S1 (OR10S1) of Homo sapiens (Human).